A 639-amino-acid chain; its full sequence is Threonine--tRNA ligase (639 aa).

The TGS domain maps to 1–61 (MINITLKDGK…KEDSELEILT (61 aa)). The interval 242 to 532 (DHRKLGKELD…LIEHFAGAFP (291 aa)) is catalytic. Zn(2+) is bound by residues Cys-333, His-384, and His-509.

Belongs to the class-II aminoacyl-tRNA synthetase family. In terms of assembly, homodimer. The cofactor is Zn(2+).

It is found in the cytoplasm. It carries out the reaction tRNA(Thr) + L-threonine + ATP = L-threonyl-tRNA(Thr) + AMP + diphosphate + H(+). Its function is as follows. Catalyzes the attachment of threonine to tRNA(Thr) in a two-step reaction: L-threonine is first activated by ATP to form Thr-AMP and then transferred to the acceptor end of tRNA(Thr). Also edits incorrectly charged L-seryl-tRNA(Thr). The chain is Threonine--tRNA ligase from Clostridium tetani (strain Massachusetts / E88).